We begin with the raw amino-acid sequence, 285 residues long: Diaminopimelate epimerase (285 aa).

Positions 11 and 62 each coordinate substrate. The active-site Proton donor is Cys71. Residues 72–73 (GN), Asn167, Asn200, and 218–219 (ER) each bind substrate. Cys227 functions as the Proton acceptor in the catalytic mechanism. 228-229 (GT) is a substrate binding site.

Belongs to the diaminopimelate epimerase family. As to quaternary structure, homodimer.

It localises to the cytoplasm. The enzyme catalyses (2S,6S)-2,6-diaminopimelate = meso-2,6-diaminopimelate. Its pathway is amino-acid biosynthesis; L-lysine biosynthesis via DAP pathway; DL-2,6-diaminopimelate from LL-2,6-diaminopimelate: step 1/1. Functionally, catalyzes the stereoinversion of LL-2,6-diaminopimelate (L,L-DAP) to meso-diaminopimelate (meso-DAP), a precursor of L-lysine and an essential component of the bacterial peptidoglycan. The sequence is that of Diaminopimelate epimerase from Agathobacter rectalis (strain ATCC 33656 / DSM 3377 / JCM 17463 / KCTC 5835 / VPI 0990) (Eubacterium rectale).